Here is a 352-residue protein sequence, read N- to C-terminus: Methylthioribose-1-phosphate isomerase (352 aa).

Substrate contacts are provided by residues 49–51 (RGA), R93, and Q202. D243 (proton donor) is an active-site residue. 253–254 (NK) provides a ligand contact to substrate.

The protein belongs to the eIF-2B alpha/beta/delta subunits family. MtnA subfamily.

The catalysed reaction is 5-(methylsulfanyl)-alpha-D-ribose 1-phosphate = 5-(methylsulfanyl)-D-ribulose 1-phosphate. It participates in amino-acid biosynthesis; L-methionine biosynthesis via salvage pathway; L-methionine from S-methyl-5-thio-alpha-D-ribose 1-phosphate: step 1/6. Functionally, catalyzes the interconversion of methylthioribose-1-phosphate (MTR-1-P) into methylthioribulose-1-phosphate (MTRu-1-P). The sequence is that of Methylthioribose-1-phosphate isomerase from Magnetococcus marinus (strain ATCC BAA-1437 / JCM 17883 / MC-1).